The following is a 460-amino-acid chain: ATP synthase subunit beta (460 aa).

Residue 150–157 participates in ATP binding; it reads GGAGVGKT.

It belongs to the ATPase alpha/beta chains family. As to quaternary structure, F-type ATPases have 2 components, CF(1) - the catalytic core - and CF(0) - the membrane proton channel. CF(1) has five subunits: alpha(3), beta(3), gamma(1), delta(1), epsilon(1). CF(0) has three main subunits: a(1), b(2) and c(9-12). The alpha and beta chains form an alternating ring which encloses part of the gamma chain. CF(1) is attached to CF(0) by a central stalk formed by the gamma and epsilon chains, while a peripheral stalk is formed by the delta and b chains.

The protein localises to the cell inner membrane. It catalyses the reaction ATP + H2O + 4 H(+)(in) = ADP + phosphate + 5 H(+)(out). Functionally, produces ATP from ADP in the presence of a proton gradient across the membrane. The catalytic sites are hosted primarily by the beta subunits. The protein is ATP synthase subunit beta of Photorhabdus laumondii subsp. laumondii (strain DSM 15139 / CIP 105565 / TT01) (Photorhabdus luminescens subsp. laumondii).